Here is a 1578-residue protein sequence, read N- to C-terminus: Cilia- and flagella-associated protein 74 (1578 aa).

Residues 1-14 (MEEPTVQFSDEDLV) are compositionally biased toward acidic residues. Disordered stretches follow at residues 1–21 (MEEP…PPMD) and 33–67 (EVER…TTKD). A compositionally biased stretch (basic and acidic residues) spans 33-65 (EVERPSEGLEDEGSHSSAKKESKGAEKMRKSTT). Coiled-coil stretches lie at residues 103-156 (RQRM…QSKI) and 330-378 (KYLF…RRQH).

The protein belongs to the CFAP74 family.

The protein localises to the cytoplasm. The protein resides in the cytoskeleton. It is found in the cilium axoneme. It localises to the flagellum axoneme. In terms of biological role, as part of the central apparatus of the cilium axoneme may play a role in cilium movement. May play an important role in sperm architecture and function. In Mus musculus (Mouse), this protein is Cilia- and flagella-associated protein 74.